Consider the following 465-residue polypeptide: Glutamate--tRNA ligase (465 aa).

Positions 5-15 (PSPTGMFHVGG) match the 'HIGH' region motif. Zn(2+) contacts are provided by Cys96, Cys98, Cys118, and Asp120. The 'KMSKS' region signature appears at 228–232 (KLSKR). Position 231 (Lys231) interacts with ATP.

It belongs to the class-I aminoacyl-tRNA synthetase family. Glutamate--tRNA ligase type 1 subfamily. As to quaternary structure, monomer. It depends on Zn(2+) as a cofactor.

It is found in the cytoplasm. It carries out the reaction tRNA(Glu) + L-glutamate + ATP = L-glutamyl-tRNA(Glu) + AMP + diphosphate. Its function is as follows. Catalyzes the attachment of glutamate to tRNA(Glu) in a two-step reaction: glutamate is first activated by ATP to form Glu-AMP and then transferred to the acceptor end of tRNA(Glu). The protein is Glutamate--tRNA ligase of Salinispora tropica (strain ATCC BAA-916 / DSM 44818 / JCM 13857 / NBRC 105044 / CNB-440).